The chain runs to 249 residues: Sugar fermentation stimulation protein homolog (249 aa).

Belongs to the SfsA family.

The polypeptide is Sugar fermentation stimulation protein homolog (Rhizobium rhizogenes (strain K84 / ATCC BAA-868) (Agrobacterium radiobacter)).